Consider the following 208-residue polypeptide: EF-hand protein 5 variant 2 (208 aa).

Residues 1-35 form a disordered region; sequence MQARGTVKVQGDANVDGKMSTGQHPHHQHLNSTQA. 4 EF-hand domains span residues 64–98, 99–134, 135–170, and 171–206; these read MAEG…HLTE, EEFH…EVDD, TMAD…LAER, and STPE…SRVN. Ca(2+) is bound by residues Glu-118, Asp-123, Asp-148, Thr-152, and Tyr-154.

The sequence is that of EF-hand protein 5 variant 2 from Trypanosoma cruzi.